A 97-amino-acid polypeptide reads, in one-letter code: Co-chaperonin GroES (97 aa).

Belongs to the GroES chaperonin family. Heptamer of 7 subunits arranged in a ring. Interacts with the chaperonin GroEL.

It localises to the cytoplasm. In terms of biological role, together with the chaperonin GroEL, plays an essential role in assisting protein folding. The GroEL-GroES system forms a nano-cage that allows encapsulation of the non-native substrate proteins and provides a physical environment optimized to promote and accelerate protein folding. GroES binds to the apical surface of the GroEL ring, thereby capping the opening of the GroEL channel. This is Co-chaperonin GroES from Erwinia tasmaniensis (strain DSM 17950 / CFBP 7177 / CIP 109463 / NCPPB 4357 / Et1/99).